A 166-amino-acid polypeptide reads, in one-letter code: Large ribosomal subunit protein uL10 (166 aa).

This sequence belongs to the universal ribosomal protein uL10 family. In terms of assembly, part of the ribosomal stalk of the 50S ribosomal subunit. The N-terminus interacts with L11 and the large rRNA to form the base of the stalk. The C-terminus forms an elongated spine to which L12 dimers bind in a sequential fashion forming a multimeric L10(L12)X complex.

Its function is as follows. Forms part of the ribosomal stalk, playing a central role in the interaction of the ribosome with GTP-bound translation factors. The polypeptide is Large ribosomal subunit protein uL10 (Listeria innocua serovar 6a (strain ATCC BAA-680 / CLIP 11262)).